Here is a 403-residue protein sequence, read N- to C-terminus: CCA-adding enzyme (403 aa).

Residues glycine 32 and arginine 35 each contribute to the ATP site. CTP contacts are provided by glycine 32 and arginine 35. The Mg(2+) site is built by aspartate 45 and aspartate 47. Residues arginine 116, aspartate 159, arginine 162, arginine 165, and arginine 168 each contribute to the ATP site. 5 residues coordinate CTP: arginine 116, aspartate 159, arginine 162, arginine 165, and arginine 168.

It belongs to the tRNA nucleotidyltransferase/poly(A) polymerase family. Bacterial CCA-adding enzyme type 3 subfamily. In terms of assembly, homodimer. It depends on Mg(2+) as a cofactor.

The enzyme catalyses a tRNA precursor + 2 CTP + ATP = a tRNA with a 3' CCA end + 3 diphosphate. The catalysed reaction is a tRNA with a 3' CCA end + 2 CTP + ATP = a tRNA with a 3' CCACCA end + 3 diphosphate. Functionally, catalyzes the addition and repair of the essential 3'-terminal CCA sequence in tRNAs without using a nucleic acid template. Adds these three nucleotides in the order of C, C, and A to the tRNA nucleotide-73, using CTP and ATP as substrates and producing inorganic pyrophosphate. tRNA 3'-terminal CCA addition is required both for tRNA processing and repair. Also involved in tRNA surveillance by mediating tandem CCA addition to generate a CCACCA at the 3' terminus of unstable tRNAs. While stable tRNAs receive only 3'-terminal CCA, unstable tRNAs are marked with CCACCA and rapidly degraded. This is CCA-adding enzyme from Streptococcus uberis (strain ATCC BAA-854 / 0140J).